Here is a 300-residue protein sequence, read N- to C-terminus: N-acetylmannosamine kinase (300 aa).

ATP is bound by residues 5–12 (ALDIGGTK) and 132–139 (GVGGGIVL). Zn(2+)-binding residues include His-156, Cys-166, Cys-168, and Cys-173.

The protein belongs to the ROK (NagC/XylR) family. NanK subfamily. In terms of assembly, homodimer.

The catalysed reaction is an N-acyl-D-mannosamine + ATP = an N-acyl-D-mannosamine 6-phosphate + ADP + H(+). It participates in amino-sugar metabolism; N-acetylneuraminate degradation; D-fructose 6-phosphate from N-acetylneuraminate: step 2/5. Functionally, catalyzes the phosphorylation of N-acetylmannosamine (ManNAc) to ManNAc-6-P. The chain is N-acetylmannosamine kinase from Haemophilus influenzae (strain PittGG).